The sequence spans 243 residues: Ribosomal RNA small subunit methyltransferase J (243 aa).

Residues 112–113 and aspartate 164 each bind S-adenosyl-L-methionine; that span reads ER.

This sequence belongs to the methyltransferase superfamily. RsmJ family.

The protein resides in the cytoplasm. The enzyme catalyses guanosine(1516) in 16S rRNA + S-adenosyl-L-methionine = N(2)-methylguanosine(1516) in 16S rRNA + S-adenosyl-L-homocysteine + H(+). In terms of biological role, specifically methylates the guanosine in position 1516 of 16S rRNA. This chain is Ribosomal RNA small subunit methyltransferase J, found in Legionella pneumophila (strain Lens).